We begin with the raw amino-acid sequence, 644 residues long: ATP-dependent zinc metalloprotease FtsH (644 aa).

Residues 1–4 (MAKN) lie on the Cytoplasmic side of the membrane. Residues 5-25 (LILWLVIAVVLMSVFQSFGPS) traverse the membrane as a helical segment. Topologically, residues 26-98 (ESNGRKVDYS…VGEPPEEPSL (73 aa)) are periplasmic. Residues 99-119 (LASIFISWFPMLLLIGVWIFF) form a helical membrane-spanning segment. Over 120 to 644 (MRQMQGGGGK…NTMSEQLGDK (525 aa)) the chain is Cytoplasmic. Residue 192–199 (GPPGTGKT) participates in ATP binding. A Zn(2+)-binding site is contributed by His414. Glu415 is a catalytic residue. Residues His418 and Asp492 each contribute to the Zn(2+) site. The tract at residues 598–644 (VRPPAGWEEPGASNNSGDNGSPKAPRPVDEPRTPNPGNTMSEQLGDK) is disordered. Residues 632–644 (NPGNTMSEQLGDK) are compositionally biased toward polar residues.

It in the central section; belongs to the AAA ATPase family. The protein in the C-terminal section; belongs to the peptidase M41 family. As to quaternary structure, homohexamer. Requires Zn(2+) as cofactor.

It is found in the cell inner membrane. Its function is as follows. Acts as a processive, ATP-dependent zinc metallopeptidase for both cytoplasmic and membrane proteins. Plays a role in the quality control of integral membrane proteins. This is ATP-dependent zinc metalloprotease FtsH from Shigella flexneri.